A 96-amino-acid polypeptide reads, in one-letter code: Co-chaperonin GroES (96 aa).

Belongs to the GroES chaperonin family. As to quaternary structure, heptamer of 7 subunits arranged in a ring. Interacts with the chaperonin GroEL.

It is found in the cytoplasm. In terms of biological role, together with the chaperonin GroEL, plays an essential role in assisting protein folding. The GroEL-GroES system forms a nano-cage that allows encapsulation of the non-native substrate proteins and provides a physical environment optimized to promote and accelerate protein folding. GroES binds to the apical surface of the GroEL ring, thereby capping the opening of the GroEL channel. The sequence is that of Co-chaperonin GroES from Nitrosospira multiformis (strain ATCC 25196 / NCIMB 11849 / C 71).